The primary structure comprises 434 residues: Ataxin-10 homolog (434 aa).

It belongs to the ataxin-10 family.

It is found in the cytoplasm. The protein localises to the nucleus. Functionally, may play a role in the regulation of cytokinesis. The protein is Ataxin-10 homolog (mug160) of Schizosaccharomyces pombe (strain 972 / ATCC 24843) (Fission yeast).